A 293-amino-acid polypeptide reads, in one-letter code: 4-hydroxy-tetrahydrodipicolinate synthase (293 aa).

Thr51 lines the pyruvate pocket. Tyr140 functions as the Proton donor/acceptor in the catalytic mechanism. Residue Lys168 is the Schiff-base intermediate with substrate of the active site. Ile209 lines the pyruvate pocket.

The protein belongs to the DapA family. As to quaternary structure, homotetramer; dimer of dimers.

The protein localises to the cytoplasm. It catalyses the reaction L-aspartate 4-semialdehyde + pyruvate = (2S,4S)-4-hydroxy-2,3,4,5-tetrahydrodipicolinate + H2O + H(+). It functions in the pathway amino-acid biosynthesis; L-lysine biosynthesis via DAP pathway; (S)-tetrahydrodipicolinate from L-aspartate: step 3/4. Catalyzes the condensation of (S)-aspartate-beta-semialdehyde [(S)-ASA] and pyruvate to 4-hydroxy-tetrahydrodipicolinate (HTPA). The chain is 4-hydroxy-tetrahydrodipicolinate synthase from Streptococcus mutans serotype c (strain ATCC 700610 / UA159).